Here is a 300-residue protein sequence, read N- to C-terminus: Cation-efflux pump FieF (300 aa).

4 helical membrane-spanning segments follow: residues 12 to 32 (AAIAATAMASLLLLIKIFAWW), 39 to 59 (ILAALVDSLVDIGASLTNLLV), 82 to 102 (AALAQSMFISGSALFLFLTGI), and 114 to 134 (PGVGVIVTIVALICTIILVSF). Zn(2+) contacts are provided by D45 and D49. Residues H153 and D157 each contribute to the Zn(2+) site. Helical transmembrane passes span 156–176 (SDVMMNGAILLALGLSWYGWH) and 178–198 (ADALFALGIGIYILYSALRMG).

It belongs to the cation diffusion facilitator (CDF) transporter (TC 2.A.4) family. FieF subfamily. Homodimer.

The protein resides in the cell inner membrane. It catalyses the reaction Zn(2+)(in) + H(+)(out) = Zn(2+)(out) + H(+)(in). It carries out the reaction Cd(2+)(in) + H(+)(out) = Cd(2+)(out) + H(+)(in). The enzyme catalyses Fe(2+)(in) + H(+)(out) = Fe(2+)(out) + H(+)(in). Its function is as follows. Divalent metal cation transporter which exports Zn(2+), Cd(2+) and possibly Fe(2+). May be involved in zinc and iron detoxification by efflux. This is Cation-efflux pump FieF from Escherichia coli O157:H7 (strain EC4115 / EHEC).